We begin with the raw amino-acid sequence, 375 residues long: Putative serine protease 47 (375 aa).

The signal sequence occupies residues 1–23; that stretch reads MGYCQGVSQVAVVLLMFPKEKEA. Residues 41–60 form a disordered region; it reads DGQLPMGPHSRASQVAPETT. The segment covering 51 to 60 has biased composition (polar residues); sequence RASQVAPETT. The Peptidase S1 domain occupies 81-323; sequence IYGGRDAAAG…FINWIDEIMR (243 aa). Cysteines 106 and 122 form a disulfide. Residues His121 and Asp172 each act as charge relay system in the active site. N-linked (GlcNAc...) asparagine glycans are attached at residues Asn183 and Asn203. Cys206 and Cys281 are disulfide-bonded. The active-site Charge relay system is Ser275.

It belongs to the peptidase S1 family.

It is found in the secreted. This chain is Putative serine protease 47 (PRSS47P), found in Homo sapiens (Human).